A 338-amino-acid polypeptide reads, in one-letter code: Tetraacyldisaccharide 4'-kinase (338 aa).

67–74 is an ATP binding site; that stretch reads IAGGAGKT.

This sequence belongs to the LpxK family.

It carries out the reaction a lipid A disaccharide + ATP = a lipid IVA + ADP + H(+). It functions in the pathway glycolipid biosynthesis; lipid IV(A) biosynthesis; lipid IV(A) from (3R)-3-hydroxytetradecanoyl-[acyl-carrier-protein] and UDP-N-acetyl-alpha-D-glucosamine: step 6/6. Its function is as follows. Transfers the gamma-phosphate of ATP to the 4'-position of a tetraacyldisaccharide 1-phosphate intermediate (termed DS-1-P) to form tetraacyldisaccharide 1,4'-bis-phosphate (lipid IVA). This Acidovorax ebreus (strain TPSY) (Diaphorobacter sp. (strain TPSY)) protein is Tetraacyldisaccharide 4'-kinase.